The chain runs to 152 residues: Toxin coregulated pilus biosynthesis protein S (152 aa).

The signal sequence occupies residues 1–20; it reads MNIKLSFISIAFLSLSFNVA.

It is found in the periplasm. The protein resides in the secreted. In terms of biological role, the toxin coregulated pilus (TCP) is essential for successful colonization of the small intestine. The chain is Toxin coregulated pilus biosynthesis protein S (tcpS) from Vibrio cholerae serotype O1 (strain ATCC 39315 / El Tor Inaba N16961).